Here is a 254-residue protein sequence, read N- to C-terminus: 3-deoxy-manno-octulosonate cytidylyltransferase (254 aa).

It belongs to the KdsB family.

The protein localises to the cytoplasm. It carries out the reaction 3-deoxy-alpha-D-manno-oct-2-ulosonate + CTP = CMP-3-deoxy-beta-D-manno-octulosonate + diphosphate. Its pathway is nucleotide-sugar biosynthesis; CMP-3-deoxy-D-manno-octulosonate biosynthesis; CMP-3-deoxy-D-manno-octulosonate from 3-deoxy-D-manno-octulosonate and CTP: step 1/1. It participates in bacterial outer membrane biogenesis; lipopolysaccharide biosynthesis. Its function is as follows. Activates KDO (a required 8-carbon sugar) for incorporation into bacterial lipopolysaccharide in Gram-negative bacteria. In Polynucleobacter asymbioticus (strain DSM 18221 / CIP 109841 / QLW-P1DMWA-1) (Polynucleobacter necessarius subsp. asymbioticus), this protein is 3-deoxy-manno-octulosonate cytidylyltransferase.